A 937-amino-acid chain; its full sequence is Proprotein convertase subtilisin/kexin type 6 (937 aa).

The span at Met-1–Arg-16 shows a compositional bias: pro residues. The interval Met-1–Gly-22 is disordered. The N-terminal stretch at Met-1–Ala-45 is a signal peptide. Residues Leu-46 to Arg-132 constitute a propeptide that is removed on maturation. The region spanning Met-149–Val-468 is the Peptidase S8 domain. Catalysis depends on charge relay system residues Asp-186 and His-227. Residue Asn-240 is glycosylated (N-linked (GlcNAc...) asparagine). Ser-401 functions as the Charge relay system in the catalytic mechanism. In terms of domain architecture, P/Homo B spans Ala-476–His-616. The Cell attachment site motif lies at Arg-534 to Asp-536. Residues Phe-621–Glu-656 form a disordered region. 5 FU repeats span residues Thr-660 to Gly-707, Ala-711 to Ala-758, Gln-762 to Phe-806, Leu-810 to Pro-855, and His-863 to Cys-911. The CRM (Cys-rich motif) stretch occupies residues Cys-680–Ile-898. N-linked (GlcNAc...) asparagine glycosylation is found at Asn-882 and Asn-900. The PLAC domain occupies Thr-899–Gly-937.

This sequence belongs to the peptidase S8 family. In terms of assembly, the precursor protein seems to exist in the reticulum endoplasmic as both a monomer and a dimer-sized complex whereas mature form exists only as a monomer, suggesting that propeptide cleavage affects its tertiary or quaternary structure. Interacts (immature form including the propeptide) with RCN3; probably involved in the maturation and the secretion of PCSK6. The cofactor is Ca(2+). In terms of tissue distribution, high expression in the anterior pituitary and in several brain regions, the atrium, and the ventricle.

Its function is as follows. Serine endoprotease that processes various proproteins by cleavage at paired basic amino acids, recognizing the RXXX[KR]R consensus motif. Likely functions in the constitutive secretory pathway, with unique restricted distribution in both neuroendocrine and non-neuroendocrine tissues. The protein is Proprotein convertase subtilisin/kexin type 6 (Pcsk6) of Rattus norvegicus (Rat).